The chain runs to 2280 residues: MVSKPFKPIVLNATFEWQVFKRCYLRVAPREAFCENLSELHHYFARRVNAWLKHATRTLPDGYTFVEEGLLDMFGTKAPDSVQEGTLFRELFGVDQTEQFPLSLADLAKLQGELVDATRTPGHALRQKYTMTTIQDLINKITKVVPVQATLTEMHARRQFERERADLFHELPLVDEDAVSQPKTYFYTMWRQVVKKGKAYFCPLVKTSAWRTKISAITEPIKDFLIAFCQAVQQEMGVNPQYLQLAWLQKLKPTTLTIILQQHKYTVSGWLATMTALVEVYSNLFDDLRKSSVAIVSSIGAFFDICKDFVSQVVELVKTTFTAQGPTDLGWAAVLAGAAMILLKMSGCPGVIGMWTKVLKICGGITTITAAARGVRWLKDLYEEAEGRRLAKMYMARGAALIELAASREVTGIDELKGLLDCFTILIEEGTELIHKFGTSPLAGLVRTYVSELETQANNIRSTIKLDTPRRVPVVIILTGAPGIGKTRLAQYVGQRFGKTSNFSVAVDHHDGYTGNTVCIWDEFDVDSKGAFVETMIGIANTAPFPLNCDRVENKGRVFTSDYVICTSNYPTSVIPDNPRAAAFYRRVLTVDVSAPDLEEWKKRNPGKRPTPDLYQDDFSHLKLMLRPYLGYNPDGDTLEGPRVAPTQISIAGLITLMERRFKEQAGPLQNLWLQVPKTLVEQSTNMVKAFMYANRAVCDVIPNPATRDIAETALTKIFVCGTAPPPEFVGKHIVITGIEVGDASIANSLLSMFTTTTRLSAAAQREYMYRVWSPLIHIQDRSINTQNLPYINRVIPVTSHWDFLRGLRHHLGFTSIPGMWKAFQGWRTSQGIVDFVAHHMADVTFPSNPECTIFRTPDADVVFYTFGSYVCFATPARVPYVGTPPTTIHSNTPRCMTWGETIALLCEVVAEFVLHFGPVILSAANIAYLMTRGSRTEEAKGKTKHGRGMRHGHRAGVSLSDDEYDEWRDLMRDWRRDMSVNDFLMLRERSALGVDDEDEARYRAWLEIRAMRMAGGAYTHATIIGRGGVRDEIIRTAPRRAPTRPQQHYEEEAPTAIVEFTQGGDHIGYGVHIGNGNVITVTHVASTSDEVNGSAFKITRTVGETTWVQGPFSQLPHMQIGSGSPVYFTTRLHPVFTISEGTFETPNITVNGFHVRIMNGYPTKKGDCGLPYFNSNRQLVALHAGTDTQGETKVAQRVVKEVTTQDEFQWKGLPVVKSGLDVGGMPTGTRYHRSPAWPEEQPGETHAPAPFGAGDKRYTFSQTEMLVNGLKPYTEPTAGVPPQLLSRAVTHVRSYIETIIGTHRSPVLTYHQACELLERTTSCGPFVQGLKGDYWDEEQQQYTGVLANHLEQAWDKANKGIAPRNAYKLALKDELRPIEKNKAGKRRLLWGCDAATTLIATAAFKAVATRLQVVTPMTPVAVGINMDSVQMQVMNDSLKGGVLYCLDYSKWDSTQNPAVTAASLAILERFAEPHPIVSCAIEALSSPAEGYVNDIKFVTRGGLPSGMPFTSVVNSINHMIYVAAAILQAYESHNVPYTGNVFQVETVHTYGDDCMYSVCPATASIFHAVLANLTSYGLKPTAADKSDAIKPTNTPVFLKRTFTQTPHGVRALLDITSITRQFYWLKANRTSDPSSPPAFDRQARSAQLENALAYASQHGPVVFDTVRQIAIKTAQGEGLVLVNTNYDQALATYNAWFIGGTVPDPVGHTEGTHKIVFEMEGNGSNPEPKQSNNPMVVDPPGTTGPTTSHVVVANPEQPNGAAQRLELAVATGAIQSNVPEAIRNCFAVFRTFAWNDRMPTGTFLGSISLHPNINPYTAHLSGMWAGWGGSFEVRLSISGSGVFAGRIIASVIPPGVDPSSIRDPGVLPHAFVDARITEPVSFMIPDVRAVDYHRMDGAEPTCSLGFWVYQPLLNPFSTTAVSTCWVSVETKPGGDFDFCLLRPPGQQMENGVSPEGLLPRRLGYSRGNRVGGLVVGMVLVAEHKQVNRHFNSNSVTFGWSTAPVNPMAAEIVTNQAHSTSRHAWLSIGAQNKGPLFPGIPNHFPDSCASTIVGAMDTSLGGRPSTGVCGPAISFQNNGDVYENDTPSVMFATYDPLTSGTGVALTNSINPASLALVRISNNDFDTSGFANDKNVVVQMSWEMYTGTNQIRGQVTPMSGTNYTFTSTGANTLVLWQERMLSYDGHQAILYSSQLERTAEYFQNDIVNIPENSMAVFNVETNSASFQIGIRPDGYMVTGGSIGINVPLEPETRFQYVGILPLSAALSGPSGNMGRARRVFQ.

Positions 454–608 (ETQANNIRST…EEWKKRNPGK (155 aa)) constitute an SF3 helicase domain. 480–487 (GAPGIGKT) contributes to the ATP binding site. Tyrosine 965 is modified (O-(5'-phospho-RNA)-tyrosine). Residues 1054-1202 (APTAIVEFTQ…TKVAQRVVKE (149 aa)) form the Peptidase C24 domain. Active-site for 3CLpro activity residues include histidine 1084, glutamate 1105, and cysteine 1169. Residues 1442–1567 (GVLYCLDYSK…SVCPATASIF (126 aa)) enclose the RdRp catalytic domain. Positions 1722-1746 (GNGSNPEPKQSNNPMVVDPPGTTGP) are disordered. Polar residues predominate over residues 1723–1735 (NGSNPEPKQSNNP).

Homodimer. Homomultimer. Post-translationally, specific enzymatic cleavages in vivo yield mature proteins. Pro-Pol is first autocatalytically cleaved, then processes the whole polyprotein. In terms of processing, VPg is uridylylated by the polymerase and is covalently attached to the 5'-end of the polyadenylated genomic and subgenomic RNAs. This uridylylated form acts as a nucleotide-peptide primer for the polymerase.

Its subcellular location is the virion. The protein localises to the host cytoplasm. The enzyme catalyses a ribonucleoside 5'-triphosphate + H2O = a ribonucleoside 5'-diphosphate + phosphate + H(+). It catalyses the reaction RNA(n) + a ribonucleoside 5'-triphosphate = RNA(n+1) + diphosphate. The catalysed reaction is Endopeptidase with a preference for cleavage when the P1 position is occupied by Glu-|-Xaa and the P1' position is occupied by Gly-|-Yaa.. Together with NTPase and NS4, initiates the formation of the replication complex. Induces the proliferation of the host smooth ER membranes forming long tubular structures. These remodeled membranes probably form the viral factories that contain the replication complex. Functionally, displays NTPase activity, but no helicase activity. Induces the formation of convoluted membranes derived from the host ER. These remodeled membranes probably form the viral factories that contain the replication complex. Together with NS2 and NS4, initiates the formation of the replication complex. Its function is as follows. Probable key protein responsible for the formation of membrane alterations by the virus. Induces the formation of convoluted membranes derived from the host ER. These remodeled membranes probably form the viral factories that contain the replication complex. Together with NS2 and NTPase, initiates the formation of the replication complex. In terms of biological role, viral genome-linked protein is covalently linked to the 5'-end of the positive-strand, negative-strand genomic RNAs and subgenomic RNA. Acts as a genome-linked replication primer. May recruit ribosome to viral RNA thereby promoting viral proteins translation. Interacts with host translation initiation complex to allow the translation of viral proteins. Protease-polymerase p76 processes the polyprotein: Pro-Pol is first released by autocleavage, then all other proteins are cleaved. Cleaves host translation initiation factor eIF4G1, eIF4G2 and PABP1 thereby inducing a shutdown of host protein synthesis. This shutdown may not prevent viral mRNA from being translated since viral Vpg replaces the cap. It is also an RNA-directed RNA polymerase which replicates genomic and antigenomic viral RNA by recognizing specific signals. Also transcribes a subgenomic mRNA by initiating RNA synthesis internally on antigenomic RNA. This sgRNA codes for structural proteins. Catalyzes the covalent attachment VPg with viral RNAs. Functionally, capsid protein self assembles to form an icosahedral capsid with a T=3 symmetry, about 38 nm in diameter, and consisting of 180 capsid proteins. The capsid encapsulate the genomic RNA and VP2 proteins. Attaches virion to target cells, inducing endocytosis of the viral particle. Acidification of the endosome induces conformational change of capsid protein thereby injecting virus genomic RNA into host cytoplasm. This Sapporo virus (isolate GI/Human/Germany/pJG-Sap01) (Hu/Dresden/pJG-Sap01/DE) protein is Genome polyprotein.